Here is a 295-residue protein sequence, read N- to C-terminus: tRNA-cytidine(32) 2-sulfurtransferase (295 aa).

The PP-loop motif signature appears at 59–64 (SGGKDS). [4Fe-4S] cluster contacts are provided by C134, C137, and C225.

This sequence belongs to the TtcA family. As to quaternary structure, homodimer. It depends on Mg(2+) as a cofactor. Requires [4Fe-4S] cluster as cofactor.

The protein resides in the cytoplasm. It catalyses the reaction cytidine(32) in tRNA + S-sulfanyl-L-cysteinyl-[cysteine desulfurase] + AH2 + ATP = 2-thiocytidine(32) in tRNA + L-cysteinyl-[cysteine desulfurase] + A + AMP + diphosphate + H(+). Its pathway is tRNA modification. Its function is as follows. Catalyzes the ATP-dependent 2-thiolation of cytidine in position 32 of tRNA, to form 2-thiocytidine (s(2)C32). The sulfur atoms are provided by the cysteine/cysteine desulfurase (IscS) system. The sequence is that of tRNA-cytidine(32) 2-sulfurtransferase from Ruegeria sp. (strain TM1040) (Silicibacter sp.).